The following is a 173-amino-acid chain: Disulfide bond formation protein B 2 (173 aa).

Residues 1 to 9 are Cytoplasmic-facing; it reads MSLAGSRLL. Residues 10 to 26 form a helical membrane-spanning segment; sequence FSLVFLVGALASWAAFN. Residues 27–44 are Periplasmic-facing; the sequence is LQTGGGLESCSLWSVQRL. Residues 45–61 form a helical membrane-spanning segment; it reads LLLALGGVNLLAVIQGP. The Cytoplasmic segment spans residues 62 to 67; that stretch reads GRVGRA. Residues 68–85 form a helical membrane-spanning segment; sequence VYWGLNLLLGLLGVVTAG. At 86–142 the chain is on the periplasmic side; that stretch reads RHVLLQNIPSEQLLACLPDMSFMLRQLSWWQALKLTFMGTSDCAEVTWTLLDMSLPE. Cys101 and Cys128 are disulfide-bonded. A helical transmembrane segment spans residues 143–161; sequence WSLLFFVIMLIFSGYRLWR. Over 162–173 the chain is Cytoplasmic; sequence QLRGARKAVALP.

It belongs to the DsbB family.

It is found in the cell inner membrane. Functionally, required for disulfide bond formation in some periplasmic proteins. Acts by oxidizing the DsbA protein. This chain is Disulfide bond formation protein B 2, found in Pseudomonas fluorescens (strain ATCC BAA-477 / NRRL B-23932 / Pf-5).